The following is a 230-amino-acid chain: Enolase-phosphatase E1 (230 aa).

The protein belongs to the HAD-like hydrolase superfamily. MasA/MtnC family. In terms of assembly, monomer. The cofactor is Mg(2+).

It catalyses the reaction 5-methylsulfanyl-2,3-dioxopentyl phosphate + H2O = 1,2-dihydroxy-5-(methylsulfanyl)pent-1-en-3-one + phosphate. It functions in the pathway amino-acid biosynthesis; L-methionine biosynthesis via salvage pathway; L-methionine from S-methyl-5-thio-alpha-D-ribose 1-phosphate: step 3/6. It participates in amino-acid biosynthesis; L-methionine biosynthesis via salvage pathway; L-methionine from S-methyl-5-thio-alpha-D-ribose 1-phosphate: step 4/6. Its function is as follows. Bifunctional enzyme that catalyzes the enolization of 2,3-diketo-5-methylthiopentyl-1-phosphate (DK-MTP-1-P) into the intermediate 2-hydroxy-3-keto-5-methylthiopentenyl-1-phosphate (HK-MTPenyl-1-P), which is then dephosphorylated to form the acireductone 1,2-dihydroxy-3-keto-5-methylthiopentene (DHK-MTPene). This is Enolase-phosphatase E1 from Marinobacter nauticus (strain ATCC 700491 / DSM 11845 / VT8) (Marinobacter aquaeolei).